Reading from the N-terminus, the 90-residue chain is Small ribosomal subunit protein uS17 (90 aa).

This sequence belongs to the universal ribosomal protein uS17 family. Part of the 30S ribosomal subunit.

Functionally, one of the primary rRNA binding proteins, it binds specifically to the 5'-end of 16S ribosomal RNA. The sequence is that of Small ribosomal subunit protein uS17 from Burkholderia ambifaria (strain ATCC BAA-244 / DSM 16087 / CCUG 44356 / LMG 19182 / AMMD) (Burkholderia cepacia (strain AMMD)).